We begin with the raw amino-acid sequence, 20 residues long: EAGEECDCGTPENPCCDAAT.

A Disintegrin domain is found at 1-20 (EAGEECDCGTPENPCCDAAT). 2 disulfides stabilise this stretch: cysteine 6–cysteine 15 and cysteine 8–cysteine 16.

This sequence belongs to the venom metalloproteinase (M12B) family. P-II subfamily. P-IIa sub-subfamily. In terms of assembly, monomer. As to expression, expressed by the venom gland.

It is found in the secreted. Functionally, inhibits fibrinogen interaction with platelets. Acts by binding to alpha-IIb/beta-3 (ITGA2B/ITGB3) on the platelet surface and inhibits aggregation induced by ADP, thrombin, platelet-activating factor and collagen. The sequence is that of Disintegrin from Bothrops fonsecai (Fonseca's lancehead).